We begin with the raw amino-acid sequence, 2515 residues long: Probable maltase-glucoamylase 2 (2515 aa).

Residues 1 to 9 (MARKLSVLE) lie on the Cytoplasmic side of the membrane. Residues 10–30 (VLLIIFCLIVVTIDILLLLLV) form a helical membrane-spanning segment. The Lumenal portion of the chain corresponds to 31 to 482 (LEETSDTSFT…DGVWIEMNEV (452 aa)). The P-type 1 domain maps to 41–88 (PECPEIPQSERIDCTPDQEVTEDICRWQYKCCWSPVADANVPRCFFPW). Cystine bridges form between Cys43–Cys72, Cys54–Cys71, and Cys65–Cys84. The interval 152–865 (SHENINLVDG…MDKQPANFIV (714 aa)) is maltase. The N-linked (GlcNAc...) asparagine glycan is linked to Asn167. Tyr371 is modified (sulfotyrosine). Residue Asn421 is glycosylated (N-linked (GlcNAc...) asparagine). Glu478 serves as the catalytic Nucleophile. Glu481 is a catalytic residue. Cystine bridges form between Cys608/Cys619, Cys916/Cys933, and Cys928/Cys946. A glycan (N-linked (GlcNAc...) asparagine) is linked at Asn613. The P-type 2 domain occupies 904–950 (WNLPVSDLEKFNCYPDDPTASEESCRQRGCLWEDTSTPGVPTCYYDT). Residues 1023-1766 (PLNTPPQPVG…GVNTYVTQVS (744 aa)) form a glucoamylase region. Position 1238 is a sulfotyrosine (Tyr1238). Asp1375 (nucleophile) is an active-site residue. The active site involves Glu1378. Disordered stretches follow at residues 1816 to 1901 (TPTK…PITT), 1994 to 2015 (STTV…STNA), and 2037 to 2091 (TVPD…SSTT). A compositionally biased stretch (polar residues) spans 1817–1831 (PTKTSTIPMSSHPSP). A compositionally biased stretch (low complexity) spans 1832-1901 (STTNATSSET…STNATVPITT (70 aa)). An N-linked (GlcNAc...) asparagine glycan is attached at Asn2249.

Belongs to the glycosyl hydrolase 31 family.

Its subcellular location is the membrane. The enzyme catalyses Hydrolysis of terminal (1-&gt;4)-linked alpha-D-glucose residues successively from non-reducing ends of the chains with release of beta-D-glucose.. The polypeptide is Probable maltase-glucoamylase 2 (Homo sapiens (Human)).